Here is a 316-residue protein sequence, read N- to C-terminus: Fe-S cluster assembly protein DRE2 (316 aa).

The interval 7–139 (VSPPKRTLLL…PDYGDNEGAV (133 aa)) is N-terminal SAM-like domain. The interval 140-208 (TLKFGLKKKN…EDTLMTEEDL (69 aa)) is linker. Residues cysteine 218, cysteine 229, cysteine 232, and cysteine 234 each coordinate [2Fe-2S] cluster. The interval 218 to 234 (CQPKAGKRRRACKDCSC) is fe-S binding site A. Residues cysteine 279, cysteine 282, cysteine 290, and cysteine 293 each contribute to the [4Fe-4S] cluster site. Short sequence motifs (cx2C motif) lie at residues 279-282 (CGNC) and 290-293 (CDGC). The interval 279–293 (CGNCSLGDAFRCDGC) is fe-S binding site B.

This sequence belongs to the anamorsin family. As to quaternary structure, monomer. Interacts with TAH18. Interacts with MIA40. Requires [2Fe-2S] cluster as cofactor. It depends on [4Fe-4S] cluster as a cofactor.

The protein localises to the cytoplasm. The protein resides in the mitochondrion intermembrane space. Its function is as follows. Component of the cytosolic iron-sulfur (Fe-S) protein assembly (CIA) machinery required for the maturation of extramitochondrial Fe-S proteins. Part of an electron transfer chain functioning in an early step of cytosolic Fe-S biogenesis, facilitating the de novo assembly of a [4Fe-4S] cluster on the scaffold complex CFD1-NBP35. Electrons are transferred to DRE2 from NADPH via the FAD- and FMN-containing protein TAH18. TAH18-DRE2 are also required for the assembly of the diferric tyrosyl radical cofactor of ribonucleotide reductase (RNR), probably by providing electrons for reduction during radical cofactor maturation in the catalytic small subunit RNR2. This chain is Fe-S cluster assembly protein DRE2, found in Fusarium vanettenii (strain ATCC MYA-4622 / CBS 123669 / FGSC 9596 / NRRL 45880 / 77-13-4) (Fusarium solani subsp. pisi).